The chain runs to 318 residues: Mitochondrial thiamine pyrophosphate carrier (318 aa).

3 Solcar repeats span residues 13–106 (NSKL…LTEL), 116–202 (HQFS…LKRA), and 214–309 (TGNL…FCNL). A run of 5 helical transmembrane segments spans residues 19–39 (AVAGSVSGFVTRALISPLDVI), 87–107 (ILSIGYGAVQFLAFEELTELL), 122–142 (FVCGGLSAGTATLTVHPVDVL), 173–193 (VFYKGLTPTVIAIFPYAGLQF), and 220–240 (LLCGCGSGVISKTFTYPLDLI). The short motif at 241 to 246 (KKRLQV) is the Substrate recognition element. Residues 293-313 (ALSTGFMFFWYELFCNLFHCI) form a helical membrane-spanning segment.

The protein belongs to the mitochondrial carrier (TC 2.A.29) family.

It localises to the mitochondrion membrane. The catalysed reaction is thiamine phosphate(out) + thiamine diphosphate(in) = thiamine phosphate(in) + thiamine diphosphate(out). In terms of biological role, mitochondrial transporter mediating uptake of thiamine diphosphate into mitochondria. It is not clear if the antiporter activity is affected by the membrane potential or by the proton electrochemical gradient. The polypeptide is Mitochondrial thiamine pyrophosphate carrier (Slc25a19) (Mus musculus (Mouse)).